We begin with the raw amino-acid sequence, 127 residues long: MARIAGVDLPRNKTIEIAITYIFGIGRSNGADVLRKANVNPATRVRDLTEEEVSRIREIVEREYRVEGDLRREIQMNIKRLMDIGCYRGLRHRKGLPVRGQRTRTNARTRRGRRGQAIGIKKKTLKK.

The disordered stretch occupies residues 99 to 127 (RGQRTRTNARTRRGRRGQAIGIKKKTLKK).

The protein belongs to the universal ribosomal protein uS13 family. In terms of assembly, part of the 30S ribosomal subunit. Forms a loose heterodimer with protein S19. Forms two bridges to the 50S subunit in the 70S ribosome.

In terms of biological role, located at the top of the head of the 30S subunit, it contacts several helices of the 16S rRNA. In the 70S ribosome it contacts the 23S rRNA (bridge B1a) and protein L5 of the 50S subunit (bridge B1b), connecting the 2 subunits; these bridges are implicated in subunit movement. Contacts the tRNAs in the A and P-sites. The polypeptide is Small ribosomal subunit protein uS13 (Roseiflexus castenholzii (strain DSM 13941 / HLO8)).